Consider the following 638-residue polypeptide: 1-deoxy-D-xylulose-5-phosphate synthase (638 aa).

Thiamine diphosphate-binding positions include His-81 and Gly-122 to Ser-124. Mg(2+) is bound at residue Asp-153. Thiamine diphosphate contacts are provided by residues Gly-154–Ser-155, Asn-182, Tyr-293, and Glu-377. Residue Asn-182 coordinates Mg(2+).

Belongs to the transketolase family. DXPS subfamily. As to quaternary structure, homodimer. It depends on Mg(2+) as a cofactor. The cofactor is thiamine diphosphate.

It carries out the reaction D-glyceraldehyde 3-phosphate + pyruvate + H(+) = 1-deoxy-D-xylulose 5-phosphate + CO2. Its pathway is metabolic intermediate biosynthesis; 1-deoxy-D-xylulose 5-phosphate biosynthesis; 1-deoxy-D-xylulose 5-phosphate from D-glyceraldehyde 3-phosphate and pyruvate: step 1/1. Catalyzes the acyloin condensation reaction between C atoms 2 and 3 of pyruvate and glyceraldehyde 3-phosphate to yield 1-deoxy-D-xylulose-5-phosphate (DXP). In Oleidesulfovibrio alaskensis (strain ATCC BAA-1058 / DSM 17464 / G20) (Desulfovibrio alaskensis), this protein is 1-deoxy-D-xylulose-5-phosphate synthase.